An 884-amino-acid polypeptide reads, in one-letter code: Probable leucine-rich repeat receptor-like protein kinase At2g28990 (884 aa).

The signal sequence occupies residues 1-19 (MKIHLLLAMIGTFVVIIGA). Topologically, residues 20–508 (QDQEGFISLD…TEKKNKFLLP (489 aa)) are extracellular. 13 N-linked (GlcNAc...) asparagine glycosylation sites follow: asparagine 70, asparagine 177, asparagine 217, asparagine 231, asparagine 251, asparagine 284, asparagine 298, asparagine 334, asparagine 418, asparagine 427, asparagine 438, asparagine 459, and asparagine 464. 3 LRR repeats span residues 404–427 (SPTI…ILQN), 428–451 (FTQL…FLAN), and 452–476 (MKTL…LLDK). Residues 509–529 (VIASAASLVIVVVVVALFFVF) form a helical membrane-spanning segment. Residues 530–884 (RKKKASPSNL…IYNEVIPQAR (355 aa)) are Cytoplasmic-facing. A disordered region spans residues 535 to 559 (SPSNLHAPPSMPVSNPGHNSQSESS). Polar residues predominate over residues 546 to 559 (PVSNPGHNSQSESS). Threonine 568 bears the Phosphothreonine mark. The 274-residue stretch at 577 to 850 (NNFDKALGEG…RVVNELKECL (274 aa)) folds into the Protein kinase domain. Residues 583–591 (LGEGGFGVV) and lysine 605 contribute to the ATP site. At tyrosine 650 the chain carries Phosphotyrosine. Residue aspartate 702 is the Proton acceptor of the active site. At serine 736 the chain carries Phosphoserine. Residues threonine 737 and threonine 742 each carry the phosphothreonine modification. Tyrosine 750 is subject to Phosphotyrosine.

Belongs to the protein kinase superfamily. Ser/Thr protein kinase family. As to quaternary structure, binds to the ammonium transporter AMT1-1.

Its subcellular location is the membrane. It catalyses the reaction L-seryl-[protein] + ATP = O-phospho-L-seryl-[protein] + ADP + H(+). The enzyme catalyses L-threonyl-[protein] + ATP = O-phospho-L-threonyl-[protein] + ADP + H(+). The polypeptide is Probable leucine-rich repeat receptor-like protein kinase At2g28990 (Arabidopsis thaliana (Mouse-ear cress)).